Here is a 771-residue protein sequence, read N- to C-terminus: Semaphorin-3A (771 aa).

The signal sequence occupies residues 1–20 (MGWLTRIVCLFWGVLLTARA). In terms of domain architecture, Sema spans 31–514 (RLKLSYKEML…STAGVAQLPL (484 aa)). N53 carries N-linked (GlcNAc...) asparagine glycosylation. C103 and C114 are oxidised to a cystine. The N-linked (GlcNAc...) asparagine glycan is linked to N125. 4 disulfides stabilise this stretch: C132/C141, C269/C381, C293/C341, and C517/C535. The region spanning 580-664 (PEERIIYGVE…GFIQTLLKVT (85 aa)) is the Ig-like C2-type domain. N590 carries an N-linked (GlcNAc...) asparagine glycan. C649 and C722 are oxidised to a cystine. Basic residues predominate over residues 728 to 737 (RDRKQRRQRP). The disordered stretch occupies residues 728–771 (RDRKQRRQRPGHTPGNSNKWKHLQENKKGRNRRTHEFERAPRSV). A compositionally biased stretch (basic and acidic residues) spans 749 to 771 (HLQENKKGRNRRTHEFERAPRSV).

The protein belongs to the semaphorin family. Interacts with PLXND1. Expressed in the dorsal root ganglia.

It is found in the secreted. Functionally, involved in the development of the olfactory system and in neuronal control of puberty. Induces the collapse and paralysis of neuronal growth cones. Could serve as a ligand that guides specific growth cones by a motility-inhibiting mechanism. Binds to the complex neuropilin-1/plexin-1. This chain is Semaphorin-3A (SEMA3A), found in Homo sapiens (Human).